The primary structure comprises 447 residues: tRNA(Ile)-lysidine synthase (447 aa).

Residue 31-36 (SGGMDS) participates in ATP binding.

The protein belongs to the tRNA(Ile)-lysidine synthase family.

It is found in the cytoplasm. The catalysed reaction is cytidine(34) in tRNA(Ile2) + L-lysine + ATP = lysidine(34) in tRNA(Ile2) + AMP + diphosphate + H(+). In terms of biological role, ligates lysine onto the cytidine present at position 34 of the AUA codon-specific tRNA(Ile) that contains the anticodon CAU, in an ATP-dependent manner. Cytidine is converted to lysidine, thus changing the amino acid specificity of the tRNA from methionine to isoleucine. This chain is tRNA(Ile)-lysidine synthase, found in Pseudothermotoga lettingae (strain ATCC BAA-301 / DSM 14385 / NBRC 107922 / TMO) (Thermotoga lettingae).